The sequence spans 324 residues: THUMP domain-containing protein 1 homolog (324 aa).

2 disordered regions span residues 1–24 (MEPA…KKYF) and 67–104 (SEKP…DDDD). A compositionally biased stretch (basic and acidic residues) spans 68–80 (EKPENEPEKKQPE). Residue threonine 99 is modified to Phosphothreonine. Residue serine 100 is modified to Phosphoserine. The 107-residue stretch at 154-260 (DIATTGKSMS…RGWCLLSVID (107 aa)) folds into the THUMP domain. The tract at residues 275–324 (NPSDKKSSGEGDSKSETSEVANGNDKEQAESSEESKSNDDENKDSTENDK) is disordered. 2 stretches are compositionally biased toward basic and acidic residues: residues 277-291 (SDKK…KSET) and 298-324 (NDKE…ENDK).

This sequence belongs to the THUMPD1 family.

This is THUMP domain-containing protein 1 homolog from Drosophila melanogaster (Fruit fly).